Consider the following 35-residue polypeptide: Photosystem II reaction center protein T (35 aa).

Residues 3–23 traverse the membrane as a helical segment; sequence ALVYTFLLVSTLGIIFFAIFF.

The protein belongs to the PsbT family. As to quaternary structure, PSII is composed of 1 copy each of membrane proteins PsbA, PsbB, PsbC, PsbD, PsbE, PsbF, PsbH, PsbI, PsbJ, PsbK, PsbL, PsbM, PsbT, PsbY, PsbZ, Psb30/Ycf12, at least 3 peripheral proteins of the oxygen-evolving complex and a large number of cofactors. It forms dimeric complexes.

The protein resides in the plastid. It localises to the chloroplast thylakoid membrane. In terms of biological role, found at the monomer-monomer interface of the photosystem II (PS II) dimer, plays a role in assembly and dimerization of PSII. PSII is a light-driven water plastoquinone oxidoreductase, using light energy to abstract electrons from H(2)O, generating a proton gradient subsequently used for ATP formation. This is Photosystem II reaction center protein T from Pisum sativum (Garden pea).